The chain runs to 297 residues: 4-hydroxy-tetrahydrodipicolinate synthase (297 aa).

Thr49 contacts pyruvate. Tyr137 serves as the catalytic Proton donor/acceptor. The Schiff-base intermediate with substrate role is filled by Lys166. Ile208 contributes to the pyruvate binding site.

This sequence belongs to the DapA family. In terms of assembly, homotetramer; dimer of dimers.

The protein localises to the cytoplasm. The enzyme catalyses L-aspartate 4-semialdehyde + pyruvate = (2S,4S)-4-hydroxy-2,3,4,5-tetrahydrodipicolinate + H2O + H(+). Its pathway is amino-acid biosynthesis; L-lysine biosynthesis via DAP pathway; (S)-tetrahydrodipicolinate from L-aspartate: step 3/4. Catalyzes the condensation of (S)-aspartate-beta-semialdehyde [(S)-ASA] and pyruvate to 4-hydroxy-tetrahydrodipicolinate (HTPA). In Phocaeicola vulgatus (strain ATCC 8482 / DSM 1447 / JCM 5826 / CCUG 4940 / NBRC 14291 / NCTC 11154) (Bacteroides vulgatus), this protein is 4-hydroxy-tetrahydrodipicolinate synthase.